Consider the following 282-residue polypeptide: MAKGLGKGINALFNQVDLSEETVEEIKIADLRPNPYQPRKHFDDEALAELKESVLQHGILQPLIVRKSLKGYDIVAGERRFRAAKLAGLDTVPAIVRELSEALMREIALLENLQREDLSPLEEAQAYDSLLKHLDLTQEQLAKRLGKSRPHIANHLRLLTLPENIQQLIAEGTLSMGHGRTLLGLKNKNKLEPLVQKVIAEQLNVRQLEQLIQQLNQNVPRETKKKEPVKDAVLKERESYLQNYFGTTVNIKRQKKKGKIEIEFFSNEDLDRILELLSERES.

The segment at residues 139-158 (EQLAKRLGKSRPHIANHLRL) is a DNA-binding region (H-T-H motif).

This sequence belongs to the ParB family.

The protein resides in the cytoplasm. It localises to the nucleoid. Its function is as follows. Required for the initiation of sporulation and for normal chromosome segregation. Antagonizes sporulation inhibition by Soj. It probably interacts with a specific DNA site and other proteins involved in partitioning and cell division, and antagonizes Soj in response to cell cycle events related to chromosome partitioning. This chain is Stage 0 sporulation protein J, found in Bacillus subtilis (strain 168).